The sequence spans 700 residues: Polyribonucleotide nucleotidyltransferase (700 aa).

2 residues coordinate Mg(2+): Asp484 and Asp490. Residues 551-610 (PRVIRMVVDPEKIREIIGPGGKTISKIIAETGVKIDIEEDGRLYITASDLRSGERAKQMI) form the KH domain. The 69-residue stretch at 620–688 (GEIYLGKVLR…KLGRISLSRK (69 aa)) folds into the S1 motif domain.

Belongs to the polyribonucleotide nucleotidyltransferase family. Requires Mg(2+) as cofactor.

The protein resides in the cytoplasm. The catalysed reaction is RNA(n+1) + phosphate = RNA(n) + a ribonucleoside 5'-diphosphate. Functionally, involved in mRNA degradation. Catalyzes the phosphorolysis of single-stranded polyribonucleotides processively in the 3'- to 5'-direction. The polypeptide is Polyribonucleotide nucleotidyltransferase (Thermoanaerobacter pseudethanolicus (strain ATCC 33223 / 39E) (Clostridium thermohydrosulfuricum)).